The following is a 453-amino-acid chain: Kynureninase (453 aa).

Pyridoxal 5'-phosphate contacts are provided by residues Leu-111, Thr-112, 139 to 142, Ser-196, Asp-226, His-229, and Tyr-251; that span reads FPSD. An N6-(pyridoxal phosphate)lysine modification is found at Lys-252. Trp-286 and Asn-314 together coordinate pyridoxal 5'-phosphate.

Belongs to the kynureninase family. In terms of assembly, homodimer. Pyridoxal 5'-phosphate is required as a cofactor.

The protein localises to the cytoplasm. It is found in the nucleus. The enzyme catalyses L-kynurenine + H2O = anthranilate + L-alanine + H(+). It catalyses the reaction 3-hydroxy-L-kynurenine + H2O = 3-hydroxyanthranilate + L-alanine + H(+). Its pathway is amino-acid degradation; L-kynurenine degradation; L-alanine and anthranilate from L-kynurenine: step 1/1. It functions in the pathway cofactor biosynthesis; NAD(+) biosynthesis; quinolinate from L-kynurenine: step 2/3. Its function is as follows. Catalyzes the cleavage of L-kynurenine (L-Kyn) and L-3-hydroxykynurenine (L-3OHKyn) into anthranilic acid (AA) and 3-hydroxyanthranilic acid (3-OHAA), respectively. This is Kynureninase from Saccharomyces cerevisiae (strain ATCC 204508 / S288c) (Baker's yeast).